The primary structure comprises 33 residues: Non-specific lipid-transfer protein (33 aa).

C14 and C29 are disulfide-bonded.

Belongs to the plant LTP family. As to quaternary structure, dimer.

Plant non-specific lipid-transfer proteins transfer phospholipids as well as galactolipids across membranes. May play a role in wax or cutin deposition in the cell walls of expanding epidermal cells and certain secretory tissues. Has antibacterial activity against Gram-positive bacteria S.aureus and S.epidermidis and blocks biofilm formation. In a mouse model, also protects against bacterial sepsis and has an anti-inflammatory effect. Exhibits antinociceptive activity upon oral or intraperitoneal application in mice. The protein is Non-specific lipid-transfer protein of Morinda citrifolia (Indian mulberry).